A 237-amino-acid polypeptide reads, in one-letter code: MRPSRRAPDELRPVSLERGVVKYAEGSCLVKFGDTHVLVTATLEDRLPPWLKGQGRGWITAEYGMLPRATLERTRREASAGKQTGRTVEIQRLIGRSLRTAIDLEALGERQITVDCDVLQADGGTRTASITGAWVALADCIKWMKTRNMLKTEVLRANVAAISCGIYNGTPVLDLDYAEDSEAETDANFVMTGDGRIIEVQGTAEKTPFTEAEFLALMALARKGVARLVDLQKMAVA.

Phosphate contacts are provided by residues R86 and 124–126 (GTR).

Belongs to the RNase PH family. Homohexameric ring arranged as a trimer of dimers.

The enzyme catalyses tRNA(n+1) + phosphate = tRNA(n) + a ribonucleoside 5'-diphosphate. Its function is as follows. Phosphorolytic 3'-5' exoribonuclease that plays an important role in tRNA 3'-end maturation. Removes nucleotide residues following the 3'-CCA terminus of tRNAs; can also add nucleotides to the ends of RNA molecules by using nucleoside diphosphates as substrates, but this may not be physiologically important. Probably plays a role in initiation of 16S rRNA degradation (leading to ribosome degradation) during starvation. This chain is Ribonuclease PH, found in Bradyrhizobium sp. (strain BTAi1 / ATCC BAA-1182).